The primary structure comprises 1799 residues: Putative neural-cadherin 2 (1799 aa).

9 N-linked (GlcNAc...) asparagine glycosylation sites follow: asparagine 13, asparagine 64, asparagine 86, asparagine 118, asparagine 195, asparagine 260, asparagine 264, asparagine 283, and asparagine 377. 7 Cadherin domains span residues aspartate 37–phenylalanine 136, aspartate 137–phenylalanine 252, proline 253–phenylalanine 364, glutamate 368–phenylalanine 485, aspartate 486–phenylalanine 590, phenylalanine 590–serine 709, and glycine 708–methionine 812. Asparagine 601, asparagine 793, asparagine 910, asparagine 948, and asparagine 969 each carry an N-linked (GlcNAc...) asparagine glycan. Residues glutamine 973–glutamine 1010 form the EGF-like 1 domain. Cystine bridges form between cysteine 977/cysteine 988, cysteine 982/cysteine 997, cysteine 1000/cysteine 1009, cysteine 1191/cysteine 1217, cysteine 1224/cysteine 1239, cysteine 1233/cysteine 1248, and cysteine 1250/cysteine 1259. The Laminin G-like 1 domain maps to glutamine 1011–cysteine 1217. Residues threonine 1220–asparagine 1260 enclose the EGF-like 2 domain. One can recognise a Laminin G-like 2 domain in the interval threonine 1263–cysteine 1454. N-linked (GlcNAc...) asparagine glycans are attached at residues asparagine 1376 and asparagine 1437. Disulfide bonds link cysteine 1419–cysteine 1454, cysteine 1501–cysteine 1512, cysteine 1506–cysteine 1523, and cysteine 1525–cysteine 1534. Residues aspartate 1497–glutamate 1535 form the EGF-like 3; calcium-binding domain. A helical transmembrane segment spans residues alanine 1549–leucine 1569. The disordered stretch occupies residues alanine 1726–leucine 1799. 3 stretches are compositionally biased toward gly residues: residues aspartate 1733–proline 1744, leucine 1752–isoleucine 1763, and serine 1775–serine 1786.

It is found in the cell membrane. In terms of biological role, cadherins are calcium-dependent cell adhesion proteins. They preferentially interact with themselves in a homophilic manner in connecting cells. The protein is Putative neural-cadherin 2 (CadN2) of Drosophila melanogaster (Fruit fly).